The chain runs to 116 residues: MIYTNNIFNFLTLFVSILIFLITTLITFAAHFLPSRNTDSEKSSPYECGFDPLNSARVPFSFRFFLVAILFLLFDLEIALLFPLPFSVFFHPIHTPLILTVGLIFEWVQGGLDWAE.

The next 3 helical transmembrane spans lie at 10–30 (FLTL…TFAA), 64–84 (FFLV…LFPL), and 88–108 (VFFH…FEWV).

Belongs to the complex I subunit 3 family.

It localises to the mitochondrion membrane. It catalyses the reaction a ubiquinone + NADH + 5 H(+)(in) = a ubiquinol + NAD(+) + 4 H(+)(out). In terms of biological role, core subunit of the mitochondrial membrane respiratory chain NADH dehydrogenase (Complex I) that is believed to belong to the minimal assembly required for catalysis. Complex I functions in the transfer of electrons from NADH to the respiratory chain. The immediate electron acceptor for the enzyme is believed to be ubiquinone. In Patiria pectinifera (Starfish), this protein is NADH-ubiquinone oxidoreductase chain 3 (ND3).